The following is a 295-amino-acid chain: Pyridoxal 5'-phosphate synthase subunit PdxS (295 aa).

D25 provides a ligand contact to D-ribose 5-phosphate. Catalysis depends on K82, which acts as the Schiff-base intermediate with D-ribose 5-phosphate. G154 lines the D-ribose 5-phosphate pocket. R166 is a binding site for D-glyceraldehyde 3-phosphate. Residues G215 and G236–S237 contribute to the D-ribose 5-phosphate site.

This sequence belongs to the PdxS/SNZ family. In the presence of PdxT, forms a dodecamer of heterodimers.

The enzyme catalyses aldehydo-D-ribose 5-phosphate + D-glyceraldehyde 3-phosphate + L-glutamine = pyridoxal 5'-phosphate + L-glutamate + phosphate + 3 H2O + H(+). It participates in cofactor biosynthesis; pyridoxal 5'-phosphate biosynthesis. In terms of biological role, catalyzes the formation of pyridoxal 5'-phosphate from ribose 5-phosphate (RBP), glyceraldehyde 3-phosphate (G3P) and ammonia. The ammonia is provided by the PdxT subunit. Can also use ribulose 5-phosphate and dihydroxyacetone phosphate as substrates, resulting from enzyme-catalyzed isomerization of RBP and G3P, respectively. The chain is Pyridoxal 5'-phosphate synthase subunit PdxS from Heliobacterium modesticaldum (strain ATCC 51547 / Ice1).